A 243-amino-acid chain; its full sequence is Probable septum site-determining protein MinC (243 aa).

Belongs to the MinC family. As to quaternary structure, interacts with MinD and FtsZ.

In terms of biological role, cell division inhibitor that blocks the formation of polar Z ring septums. Rapidly oscillates between the poles of the cell to destabilize FtsZ filaments that have formed before they mature into polar Z rings. Prevents FtsZ polymerization. This is Probable septum site-determining protein MinC from Wigglesworthia glossinidia brevipalpis.